The sequence spans 165 residues: Peptidyl-prolyl cis-trans isomerase-like 1 (165 aa).

Positions 3–157 (EREEVILDTS…IVQKILYALN (155 aa)) constitute a PPIase cyclophilin-type domain.

The protein belongs to the cyclophilin-type PPIase family. PPIL1 subfamily.

It catalyses the reaction [protein]-peptidylproline (omega=180) = [protein]-peptidylproline (omega=0). PPIases accelerate the folding of proteins. It catalyzes the cis-trans isomerization of proline imidic peptide bonds in oligopeptides. This chain is Peptidyl-prolyl cis-trans isomerase-like 1 (cyp3), found in Rhizopus delemar (strain RA 99-880 / ATCC MYA-4621 / FGSC 9543 / NRRL 43880) (Mucormycosis agent).